A 230-amino-acid chain; its full sequence is MASLGLQLVGYILGLLGLLGTLVAMLLPSWRTSSYVGTSIVTAVGFSKGLWMECATHSTGITQCDIYSTLLGLPADIQAAQAMMVTSSAISSLACIVSVVGMRCTVFCQDSRAKDRLAVVGGVFFIIGGLLGFIPVAWNLHGILRDFYSPLVPDSMKFEIGEALYLGIISSLFSLVAGIILCFSCPLQGNRSDYYDSYQAQPLATRGSPRPGQPPKAKSEFNSYSLTGYV.

Topologically, residues 1–7 (MASLGLQ) are cytoplasmic. The helical transmembrane segment at 8–28 (LVGYILGLLGLLGTLVAMLLP) threads the bilayer. Residues 29-81 (SWRTSSYVGTSIVTAVGFSKGLWMECATHSTGITQCDIYSTLLGLPADIQAAQ) lie on the Extracellular side of the membrane. Residues Cys-54 and Cys-64 are joined by a disulfide bond. Residues 82 to 102 (AMMVTSSAISSLACIVSVVGM) traverse the membrane as a helical segment. Over 103-116 (RCTVFCQDSRAKDR) the chain is Cytoplasmic. A helical transmembrane segment spans residues 117–137 (LAVVGGVFFIIGGLLGFIPVA). Over 138–162 (WNLHGILRDFYSPLVPDSMKFEIGE) the chain is Extracellular. Residues 163 to 183 (ALYLGIISSLFSLVAGIILCF) form a helical membrane-spanning segment. At 184–230 (SCPLQGNRSDYYDSYQAQPLATRGSPRPGQPPKAKSEFNSYSLTGYV) the chain is on the cytoplasmic side. The interval 205–230 (TRGSPRPGQPPKAKSEFNSYSLTGYV) is disordered. Residue Lys-218 forms a Glycyl lysine isopeptide (Lys-Gly) (interchain with G-Cter in SUMO) linkage. Phosphoserine occurs at positions 219 and 223. The span at 220–230 (EFNSYSLTGYV) shows a compositional bias: polar residues. The interval 229-230 (YV) is interaction with TJP1, TJP2 and TJP3.

It belongs to the claudin family. Can form homo- and heteropolymers with other claudins to mediate paracellular barrier and channel functions of tight junctions in response to physiological stimuli. Homopolymers interact with CLDN3, but not CLDN1, homopolymers. Directly interacts with TJP1/ZO-1, TJP2/ZO-2 and TJP3/ZO-3. The disulfide bond is necessary for pore formation, but is not required for correct protein trafficking.

It is found in the cell junction. It localises to the tight junction. Its subcellular location is the cell membrane. It catalyses the reaction Na(+)(in) = Na(+)(out). It carries out the reaction K(+)(in) = K(+)(out). The enzyme catalyses Rb(+)(in) = Rb(+)(out). The catalysed reaction is Li(+)(in) = Li(+)(out). It catalyses the reaction Cs(+)(in) = Cs(+)(out). It carries out the reaction Ca(2+)(in) = Ca(2+)(out). The enzyme catalyses methylamine(out) = methylamine(in). The catalysed reaction is choline(out) = choline(in). It catalyses the reaction H2O(in) = H2O(out). Its function is as follows. Forms paracellular channels: polymerizes in tight junction strands with cation- and water-selective channels through the strands, conveying epithelial permeability in a process known as paracellular tight junction permeability. In intestinal epithelium, allows for sodium and water fluxes from the peritoneal side to the lumen of the intestine to regulate nutrient absorption and clear enteric pathogens as part of mucosal immune response. In kidney, allows passive sodium and calcium reabsorption across proximal tubules from the lumen back to the bloodstream. In the hepatobiliary tract, allows paracellular water and cation fluxes in the hepatic perivenous areas and biliary epithelium to generate bile flow and maintain osmotic gradients. The sequence is that of Claudin-2 (CLDN2) from Canis lupus familiaris (Dog).